A 493-amino-acid polypeptide reads, in one-letter code: Ribose import ATP-binding protein RbsA (493 aa).

2 ABC transporter domains span residues 5 to 241 (LKIS…VGRR) and 252 to 491 (EKGE…AAAI). Position 37–44 (37–44 (GENGAGKS)) interacts with ATP.

The protein belongs to the ABC transporter superfamily. Ribose importer (TC 3.A.1.2.1) family. As to quaternary structure, the complex is composed of an ATP-binding protein (RbsA), two transmembrane proteins (RbsC) and a solute-binding protein (RbsB).

Its subcellular location is the cell inner membrane. It carries out the reaction D-ribose(out) + ATP + H2O = D-ribose(in) + ADP + phosphate + H(+). In terms of biological role, part of the ABC transporter complex RbsABC involved in ribose import. Responsible for energy coupling to the transport system. In Haemophilus influenzae (strain 86-028NP), this protein is Ribose import ATP-binding protein RbsA.